The primary structure comprises 364 residues: Aminomethyltransferase (364 aa).

It belongs to the GcvT family. The glycine cleavage system is composed of four proteins: P, T, L and H.

The enzyme catalyses N(6)-[(R)-S(8)-aminomethyldihydrolipoyl]-L-lysyl-[protein] + (6S)-5,6,7,8-tetrahydrofolate = N(6)-[(R)-dihydrolipoyl]-L-lysyl-[protein] + (6R)-5,10-methylene-5,6,7,8-tetrahydrofolate + NH4(+). Functionally, the glycine cleavage system catalyzes the degradation of glycine. This is Aminomethyltransferase from Shewanella baltica (strain OS155 / ATCC BAA-1091).